Consider the following 201-residue polypeptide: 3-isopropylmalate dehydratase small subunit (201 aa).

It belongs to the LeuD family. LeuD type 1 subfamily. Heterodimer of LeuC and LeuD.

The enzyme catalyses (2R,3S)-3-isopropylmalate = (2S)-2-isopropylmalate. It participates in amino-acid biosynthesis; L-leucine biosynthesis; L-leucine from 3-methyl-2-oxobutanoate: step 2/4. Functionally, catalyzes the isomerization between 2-isopropylmalate and 3-isopropylmalate, via the formation of 2-isopropylmaleate. This Roseobacter denitrificans (strain ATCC 33942 / OCh 114) (Erythrobacter sp. (strain OCh 114)) protein is 3-isopropylmalate dehydratase small subunit.